The primary structure comprises 509 residues: FAD-linked oxidoreductase dpmaF (509 aa).

Residues 1-21 (MTRLSLQLIAGLAGQAWLVNS) form the signal peptide. The FAD-binding PCMH-type domain occupies 59–231 (LQYEPIAVAV…AEYGFETFPA (173 aa)). N-linked (GlcNAc...) asparagine glycans are attached at residues Asn-125, Asn-193, and Asn-281.

Belongs to the oxygen-dependent FAD-linked oxidoreductase family. FAD serves as cofactor.

It functions in the pathway secondary metabolite biosynthesis; terpenoid biosynthesis. FAD-linked oxidoreductase; part of the gene cluster that mediates the biosynthesis of the diterpenoid pyrones subglutinols A and B. The first step of the pathway is the synthesis of the alpha-pyrone moiety by the polyketide synthase dpmaA via condensation of one acetyl-CoA starter unit with 3 malonyl-CoA units and 2 methylations. The alpha-pyrone is then combined with geranylgeranyl pyrophosphate (GGPP) formed by the GGPP synthase dpmaD through the action of the prenyltransferase dpmaC to yield a linear alpha-pyrone diterpenoid. Subsequent steps in the diterpenoid pyrone biosynthetic pathway involve the decalin core formation, which is initiated by the epoxidation of the C10-C11 olefin by the FAD-dependent oxidoreductase dpmaE, and is followed by a cyclization cascade catalyzed by the terpene cyclase dpmaB. The dehydrogenase dpmaF is then involved in tetrahydrofuran (THF) ring formation at the C5 unit to complete the formation of subglutinols A and B. This Metarhizium anisopliae (Entomophthora anisopliae) protein is FAD-linked oxidoreductase dpmaF.